Consider the following 251-residue polypeptide: DNA repair protein RecO (251 aa).

This sequence belongs to the RecO family.

Its function is as follows. Involved in DNA repair and RecF pathway recombination. The polypeptide is DNA repair protein RecO (Staphylococcus saprophyticus subsp. saprophyticus (strain ATCC 15305 / DSM 20229 / NCIMB 8711 / NCTC 7292 / S-41)).